We begin with the raw amino-acid sequence, 1220 residues long: Plasma membrane calcium-transporting ATPase 1 (1220 aa).

Position 2 is an N-acetylglycine (glycine 2). Residues 2-105 (GDMANNSVVY…KTFLQLVWEA (104 aa)) are Cytoplasmic-facing. Residues serine 8 and serine 17 each carry the phosphoserine modification. A helical membrane pass occupies residues 106–126 (LQDVTLIILEIAAIVSLGLSF). Residues 127 to 154 (YQPPEGDNALCGEVSVGEEEGEGETGWI) are Extracellular-facing. Residues 155-175 (EGAAILLSVVCVVLVTAFNDW) traverse the membrane as a helical segment. The Cytoplasmic portion of the chain corresponds to 176–366 (SKEKQFRGLQ…KEKSVLQGKL (191 aa)). Residues 297–356 (EEEKKDEKKKEKKNKKQDGAIENRNKAKAQDGEPMEMQPLKSEEGGDGDEKDKKKANLPK) form a disordered region. Composition is skewed to basic and acidic residues over residues 312 to 327 (KQDG…KAQD) and 337 to 356 (KSEE…NLPK). Serine 338 is modified (phosphoserine). A helical membrane pass occupies residues 367–386 (TKLAVQIGKAGLLMSAITVI). The Extracellular portion of the chain corresponds to 387–418 (ILVLYFLIDTFWVQKRPWLAECTPIYIQYFVK). The helical transmembrane segment at 419-439 (FFIIGVTVLVVAVPEGLPLPV) threads the bilayer. Topologically, residues 440-855 (TISLAYSVNE…RNVYDSISKF (416 aa)) are cytoplasmic. Aspartate 475 serves as the catalytic 4-aspartylphosphate intermediate. Mg(2+)-binding residues include aspartate 475, threonine 477, and aspartate 797. The helical transmembrane segment at 856-876 (LQFQLTVNVVAVIVAFTGACI) threads the bilayer. Over 877–882 (TQDSPL) the chain is Extracellular. Residues 883–903 (KAVQMLWVNLIMDTLASLALA) traverse the membrane as a helical segment. The Cytoplasmic segment spans residues 904 to 927 (TEPPTESLLLGKPYGRNKPLISRT). A helical membrane pass occupies residues 928–948 (MMKNILGHAFYQLVVVFTLLL). The Extracellular portion of the chain corresponds to 949-971 (AGEKFFDIDSGRNAPLHAPPSEH). The helical transmembrane segment at 972-991 (YTIVFNIFVLMQLFNEINAR) threads the bilayer. The Cytoplasmic portion of the chain corresponds to 992-1005 (KIHGERNVFEGIFN). A helical membrane pass occupies residues 1006-1027 (NAIFCTIVLGTFVVQIIIVQFA). The Extracellular segment spans residues 1028 to 1039 (GKPFSCSELSVE). Residues 1040 to 1060 (QWLWSIFLGMGTLLWGQLIST) traverse the membrane as a helical segment. The Cytoplasmic portion of the chain corresponds to 1061 to 1220 (IPTSRLKFQK…SPLHSLETSL (160 aa)). The calmodulin-binding subdomain A stretch occupies residues 1100–1117 (LRRWQILWFRGLNRIQTQ). The residue at position 1116 (threonine 1116) is a Phosphothreonine; by PKC. Residues 1118-1220 (IRVVNAFRSS…SPLHSLETSL (103 aa)) are required for basolateral membrane targeting. 2 positions are modified to phosphoserine: serine 1140 and serine 1155. Residues 1160 to 1220 (PLIDDTDAED…SPLHSLETSL (61 aa)) form a disordered region. Threonine 1165 carries the post-translational modification Phosphothreonine. Serine 1177 bears the Phosphoserine; by PKA mark. Serine 1178 and serine 1182 each carry phosphoserine. A compositionally biased stretch (polar residues) spans 1200 to 1220 (MNKSATSSSPGSPLHSLETSL).

It belongs to the cation transport ATPase (P-type) (TC 3.A.3) family. Type IIB subfamily. In terms of assembly, monomer. Dimer. Oligomer. Calmodulin binding. Interacts with PDZD11. Interacts with SLC35G1 and STIM1. Interacts with YWHAE; interacts with the monomeric and dimeric forms of the YWHAE but prefer the monomer form; this interaction inhibits calcium-transporting ATPase activity. Interacts with NPTN; this interaction stabilizes ATP2B1 and increases ATPase activity; this interaction controls T cell calcium homeostasis following T cell activation. Interacts with EPB41; regulates small intestinal calcium absorption through regulation of membrane expression of ATP2B1. In terms of tissue distribution, isoform B is ubiquitously expressed and is the most predominant isoform. Isoform C is expressed at much lower levels in all tissues tested, but liver, while isoform A is found only in aorta, brain and stomach.

It is found in the cell membrane. The protein localises to the basolateral cell membrane. It localises to the synapse. Its subcellular location is the presynaptic cell membrane. The protein resides in the cytoplasmic vesicle. It is found in the secretory vesicle. The protein localises to the synaptic vesicle membrane. The catalysed reaction is Ca(2+)(in) + ATP + H2O = Ca(2+)(out) + ADP + phosphate + H(+). Catalyzes the hydrolysis of ATP coupled with the transport of calcium from the cytoplasm to the extracellular space thereby maintaining intracellular calcium homeostasis. Plays a role in blood pressure regulation through regulation of intracellular calcium concentration and nitric oxide production leading to regulation of vascular smooth muscle cells vasoconstriction. Positively regulates bone mineralization through absorption of calcium from the intestine. Plays dual roles in osteoclast differentiation and survival by regulating RANKL-induced calcium oscillations in preosteoclasts and mediating calcium extrusion in mature osteoclasts. Regulates insulin sensitivity through calcium/calmodulin signaling pathway by regulating AKT1 activation and NOS3 activation in endothelial cells. May play a role in synaptic transmission by modulating calcium and proton dynamics at the synaptic vesicles. The sequence is that of Plasma membrane calcium-transporting ATPase 1 from Oryctolagus cuniculus (Rabbit).